The sequence spans 517 residues: MQLKLRWITILIVFVVSLFFMFPLDKRINLGLDLKGGMHVILGVETEKAVQAKIDTLTGQIRKELRNSKINFAFVQKNESGKISIGLSDPAERNKVKDLISKNYPILKESGLNSDEKVIELSLDTDEVKRIKDYAVEQAVQVIRNRVDQFGVNEPVIQRQGKEHILVQLAGITDPERAVKLIGKTAQLKFYLLDENANNEETIKSGNIPPDDIILYGKKIDKVTGQIVSTIPYVLKKDAVLTGDYLLEAEVRISSQFNEPYVSIKFDPAGSKIFEEITAENVNKRMAIVLDDNVYSAPVIRERIAGGEAQISGSFTLEEAKDLAIVLRAGSLPAPVKILENRTIGPSLGQDSIKKGIWAGIIGVAAVIIFMLIYYKFSGFIASIALLSNAIIILGAMGMFKATLTLPGIAGLILTMGMAIDANVLIFERIREELRLGRTPMNALEAGFEKAMSTIIDSNITTLIAGLVLFQFGTGPVKGFAVTLTIGILSSIFTAVTLSKTIFLTLYGNKEIKKLSV.

6 consecutive transmembrane segments (helical) span residues 5 to 25 (LRWI…FPLD), 357 to 377 (IWAG…YYKF), 380 to 400 (FIAS…MGMF), 407 to 427 (PGIA…VLIF), 455 to 475 (IIDS…FGTG), and 479 to 499 (GFAV…VTLS).

The protein belongs to the SecD/SecF family. SecD subfamily. In terms of assembly, forms a complex with SecF. Part of the essential Sec protein translocation apparatus which comprises SecA, SecYEG and auxiliary proteins SecDF. Other proteins may also be involved.

It localises to the cell inner membrane. In terms of biological role, part of the Sec protein translocase complex. Interacts with the SecYEG preprotein conducting channel. SecDF uses the proton motive force (PMF) to complete protein translocation after the ATP-dependent function of SecA. The protein is Protein translocase subunit SecD of Calditerrivibrio nitroreducens (strain DSM 19672 / NBRC 101217 / Yu37-1).